The chain runs to 187 residues: HTH-type transcriptional repressor Rv1474c (187 aa).

Residues 10-70 (AARRRQILDG…ALAREDTERM (61 aa)) enclose the HTH tetR-type domain. The H-T-H motif DNA-binding region spans 33 to 52 (TVRRLEQAIGMSRGAIFHHF).

As to quaternary structure, homodimer.

Its activity is regulated as follows. Binding to DNA is abolished in the presence of high concentration of iron. Specifically binds to tetracycline, which leads to a conformational change in the structure of the protein and inhibits the DNA binding activity. Represses the expression of the aconitase gene acn and its own expression, in an iron-responsive manner. Binds to the inverted repeat element present in the upstream region of acn (Rv1475c)-Rv1474c operon. Preferentially binds to major groove of the DNA. The sequence is that of HTH-type transcriptional repressor Rv1474c from Mycobacterium tuberculosis (strain ATCC 25618 / H37Rv).